A 525-amino-acid chain; its full sequence is GMP synthase [glutamine-hydrolyzing] (525 aa).

In terms of domain architecture, Glutamine amidotransferase type-1 spans arginine 9 to leucine 207. Cysteine 86 serves as the catalytic Nucleophile. Active-site residues include histidine 181 and glutamate 183. One can recognise a GMPS ATP-PPase domain in the interval tryptophan 208–arginine 400. Serine 235–serine 241 lines the ATP pocket.

In terms of assembly, homodimer.

It carries out the reaction XMP + L-glutamine + ATP + H2O = GMP + L-glutamate + AMP + diphosphate + 2 H(+). Its pathway is purine metabolism; GMP biosynthesis; GMP from XMP (L-Gln route): step 1/1. Catalyzes the synthesis of GMP from XMP. The polypeptide is GMP synthase [glutamine-hydrolyzing] (Photorhabdus laumondii subsp. laumondii (strain DSM 15139 / CIP 105565 / TT01) (Photorhabdus luminescens subsp. laumondii)).